The primary structure comprises 327 residues: L-lactate dehydrogenase 1 (327 aa).

NAD(+) contacts are provided by residues Val-21, Asp-42, Lys-47, Tyr-72, and 86 to 87 (GA). Substrate contacts are provided by residues Gln-89, Arg-95, and 127–130 (NPVD). NAD(+) contacts are provided by residues 125 to 127 (AAN) and Ser-150. Substrate is bound at residue 155-158 (DSAR). Beta-D-fructose 1,6-bisphosphate contacts are provided by Arg-160 and His-175. Residue His-182 is the Proton acceptor of the active site. At Tyr-227 the chain carries Phosphotyrosine. Thr-236 provides a ligand contact to substrate.

Belongs to the LDH/MDH superfamily. LDH family. Homotetramer.

The protein localises to the cytoplasm. It carries out the reaction (S)-lactate + NAD(+) = pyruvate + NADH + H(+). Its pathway is fermentation; pyruvate fermentation to lactate; (S)-lactate from pyruvate: step 1/1. With respect to regulation, allosterically activated by fructose 1,6-bisphosphate (FBP). Catalyzes the conversion of lactate to pyruvate. The chain is L-lactate dehydrogenase 1 from Enterococcus faecalis (strain ATCC 700802 / V583).